A 201-amino-acid chain; its full sequence is Potassium-transporting ATPase KdpC subunit (201 aa).

The chain crosses the membrane as a helical span at residues 12-34 (LLALTMITGLAYPLAVTGLATVL). The segment at 69–102 (RPSATVAPDPADSSKTVSAPYNAANSGGSNLGPT) is disordered. Polar residues predominate over residues 81–101 (SSKTVSAPYNAANSGGSNLGP).

It belongs to the KdpC family. In terms of assembly, the system is composed of three essential subunits: KdpA, KdpB and KdpC.

The protein resides in the cell inner membrane. Functionally, part of the high-affinity ATP-driven potassium transport (or Kdp) system, which catalyzes the hydrolysis of ATP coupled with the electrogenic transport of potassium into the cytoplasm. This subunit acts as a catalytic chaperone that increases the ATP-binding affinity of the ATP-hydrolyzing subunit KdpB by the formation of a transient KdpB/KdpC/ATP ternary complex. This Rhodopseudomonas palustris (strain TIE-1) protein is Potassium-transporting ATPase KdpC subunit.